We begin with the raw amino-acid sequence, 102 residues long: NADH-quinone oxidoreductase subunit K (102 aa).

Helical transmembrane passes span 6–26 (LEHG…GLMV), 30–50 (ILFV…AFVV), and 62–82 (VMFI…LAIL).

It belongs to the complex I subunit 4L family. NDH-1 is composed of 13 different subunits. Subunits NuoA, H, J, K, L, M, N constitute the membrane sector of the complex.

It localises to the cell inner membrane. It catalyses the reaction a quinone + NADH + 5 H(+)(in) = a quinol + NAD(+) + 4 H(+)(out). Its function is as follows. NDH-1 shuttles electrons from NADH, via FMN and iron-sulfur (Fe-S) centers, to quinones in the respiratory chain. The immediate electron acceptor for the enzyme in this species is believed to be ubiquinone. Couples the redox reaction to proton translocation (for every two electrons transferred, four hydrogen ions are translocated across the cytoplasmic membrane), and thus conserves the redox energy in a proton gradient. This is NADH-quinone oxidoreductase subunit K from Pseudomonas putida (strain ATCC 700007 / DSM 6899 / JCM 31910 / BCRC 17059 / LMG 24140 / F1).